Reading from the N-terminus, the 115-residue chain is Large ribosomal subunit protein bL20 (115 aa).

This sequence belongs to the bacterial ribosomal protein bL20 family.

In terms of biological role, binds directly to 23S ribosomal RNA and is necessary for the in vitro assembly process of the 50S ribosomal subunit. It is not involved in the protein synthesizing functions of that subunit. This is Large ribosomal subunit protein bL20 from Pelodictyon phaeoclathratiforme (strain DSM 5477 / BU-1).